The chain runs to 166 residues: Holin-like protein TcdE (166 aa).

4 helical membrane passes run 15–35 (IFFYINLGGVMNMTISFLSEH), 36–56 (IFIKLVILTISFDTLLGCLSA), 77–97 (MIACIFFLSVVDILTKFNFLF), and 111–131 (HLGISEFFSILFILYESVSIL).

This sequence belongs to the bacteriophage holin family. As to quaternary structure, homomultimer.

It localises to the cell membrane. Its function is as follows. Holin-like protein required for secretion of toxins A and B (TcdA and TcdB). Facilitates the release of toxins to the extracellular environment without causing the bacterial cell lysis. Has weak activity, suggesting that it may act as a antiholin when multiple forms are produced. This chain is Holin-like protein TcdE, found in Clostridioides difficile (Peptoclostridium difficile).